The sequence spans 424 residues: MGPSCLLFLCLLLCGGPELCYPQTQWLLPGGTPTPAGSSSPVEVECKEAELVVTVRRDLFGTGKLVQPGDLTLGSEGCQPLVAVDTDVVRLNAQLHECSSGVQVTEDALVYNTFLLHDPRPVNGLSILRTNRVEVPIECRYPRQGNVSSHPIQPTWVPFSATVSSEEKLAFSLRLMEEDWNTEKSSPTFHLGEVAHLQAEVQTGSHLPLQLFVDHCVATPSPLPGQNSSPHHFIVDSHGCLVDGLSESFSAFQVPRPRPETLQFTVDVFHFANSSRNTVYITCHLKVAPANQIPDKLNKACSFNKTSQSWLPVEGDADICDCCSNGNCSNSSSSEFETHEPAQWSTLVSRNRRHVTDEADVTVGPLIFLGKANDQAVEGWTSSAQTSVALGLGLATVAFLTLAAIVLGVTRKCHTSSYLVSLPQ.

Residues 1 to 22 (MGPSCLLFLCLLLCGGPELCYP) form the signal peptide. Gln-23 carries the post-translational modification Pyrrolidone carboxylic acid. Residues 23–387 (QTQWLLPGGT…EGWTSSAQTS (365 aa)) are Extracellular-facing. O-linked (GalNAc...) threonine glycosylation is found at Thr-32 and Thr-34. An O-linked (GalNAc...) serine glycan is attached at Ser-39. Residues 45 to 308 (ECKEAELVVT…KACSFNKTSQ (264 aa)) form the ZP domain. 2 disulfides stabilise this stretch: Cys-46–Cys-139 and Cys-78–Cys-98. N-linked (GlcNAc...) asparagine glycosylation is present at Asn-146. Residues Thr-155 and Thr-162 are each glycosylated (O-linked (GalNAc...) threonine). Cystine bridges form between Cys-216–Cys-283 and Cys-240–Cys-301. Asn-273, Asn-304, Asn-327, and Asn-330 each carry an N-linked (GlcNAc...) asparagine glycan. A propeptide spans 352–424 (RRHVTDEADV…TSSYLVSLPQ (73 aa)) (removed in mature form). Residues 388–408 (VALGLGLATVAFLTLAAIVLG) form a helical membrane-spanning segment. Topologically, residues 409 to 424 (VTRKCHTSSYLVSLPQ) are cytoplasmic.

Belongs to the ZP domain family. ZPC subfamily. In terms of assembly, polymers of ZP2 and ZP3 organized into long filaments cross-linked by ZP1 homodimers. Interacts with ZP1 and ZP2. Proteolytically cleaved before the transmembrane segment to yield the secreted ectodomain incorporated in the zona pellucida. Post-translationally, N-glycosylated; N-linked glycans are of high mannose/hybrid type, as well as bi-, tri- and tetra-antennary complex types. In terms of processing, O-glycosylated; removal of O-linked glycans may play an important role in the post-fertilization block to polyspermy. In terms of tissue distribution, expressed in oocytes.

It is found in the zona pellucida. It localises to the cell membrane. Component of the zona pellucida, an extracellular matrix surrounding oocytes which mediates sperm binding, induction of the acrosome reaction and prevents post-fertilization polyspermy. The zona pellucida is composed of 3 to 4 glycoproteins, ZP1, ZP2, ZP3, and ZP4. ZP3 is essential for sperm binding and zona matrix formation. The sequence is that of Zona pellucida sperm-binding protein 3 (Zp3) from Rattus norvegicus (Rat).